Reading from the N-terminus, the 299-residue chain is Acetylglutamate kinase (299 aa).

Substrate-binding positions include 70-71 (GG), Arg-92, and Asn-186.

The protein belongs to the acetylglutamate kinase family. ArgB subfamily.

The protein localises to the cytoplasm. It catalyses the reaction N-acetyl-L-glutamate + ATP = N-acetyl-L-glutamyl 5-phosphate + ADP. The protein operates within amino-acid biosynthesis; L-arginine biosynthesis; N(2)-acetyl-L-ornithine from L-glutamate: step 2/4. Functionally, catalyzes the ATP-dependent phosphorylation of N-acetyl-L-glutamate. The polypeptide is Acetylglutamate kinase (Caldanaerobacter subterraneus subsp. tengcongensis (strain DSM 15242 / JCM 11007 / NBRC 100824 / MB4) (Thermoanaerobacter tengcongensis)).